Here is a 72-residue protein sequence, read N- to C-terminus: DNA-directed RNA polymerase subunit omega (72 aa).

Belongs to the RNA polymerase subunit omega family. The RNAP catalytic core consists of 2 alpha, 1 beta, 1 beta' and 1 omega subunit. When a sigma factor is associated with the core the holoenzyme is formed, which can initiate transcription.

The catalysed reaction is RNA(n) + a ribonucleoside 5'-triphosphate = RNA(n+1) + diphosphate. Promotes RNA polymerase assembly. Latches the N- and C-terminal regions of the beta' subunit thereby facilitating its interaction with the beta and alpha subunits. The chain is DNA-directed RNA polymerase subunit omega from Campylobacter lari (strain RM2100 / D67 / ATCC BAA-1060).